We begin with the raw amino-acid sequence, 238 residues long: Enolase-phosphatase E1 (238 aa).

Belongs to the HAD-like hydrolase superfamily. MasA/MtnC family. As to quaternary structure, monomer. The cofactor is Mg(2+).

It carries out the reaction 5-methylsulfanyl-2,3-dioxopentyl phosphate + H2O = 1,2-dihydroxy-5-(methylsulfanyl)pent-1-en-3-one + phosphate. The protein operates within amino-acid biosynthesis; L-methionine biosynthesis via salvage pathway; L-methionine from S-methyl-5-thio-alpha-D-ribose 1-phosphate: step 3/6. It functions in the pathway amino-acid biosynthesis; L-methionine biosynthesis via salvage pathway; L-methionine from S-methyl-5-thio-alpha-D-ribose 1-phosphate: step 4/6. In terms of biological role, bifunctional enzyme that catalyzes the enolization of 2,3-diketo-5-methylthiopentyl-1-phosphate (DK-MTP-1-P) into the intermediate 2-hydroxy-3-keto-5-methylthiopentenyl-1-phosphate (HK-MTPenyl-1-P), which is then dephosphorylated to form the acireductone 1,2-dihydroxy-3-keto-5-methylthiopentene (DHK-MTPene). The polypeptide is Enolase-phosphatase E1 (Synechococcus elongatus (strain ATCC 33912 / PCC 7942 / FACHB-805) (Anacystis nidulans R2)).